Consider the following 397-residue polypeptide: Succinyl-diaminopimelate desuccinylase (397 aa).

His73 is a Zn(2+) binding site. Residue Asp75 is part of the active site. Asp106 contributes to the Zn(2+) binding site. The active-site Proton acceptor is Glu140. 3 residues coordinate Zn(2+): Glu141, Glu169, and His366.

The protein belongs to the peptidase M20A family. DapE subfamily. In terms of assembly, homodimer. Zn(2+) serves as cofactor. Co(2+) is required as a cofactor.

The enzyme catalyses N-succinyl-(2S,6S)-2,6-diaminopimelate + H2O = (2S,6S)-2,6-diaminopimelate + succinate. The protein operates within amino-acid biosynthesis; L-lysine biosynthesis via DAP pathway; LL-2,6-diaminopimelate from (S)-tetrahydrodipicolinate (succinylase route): step 3/3. Its function is as follows. Catalyzes the hydrolysis of N-succinyl-L,L-diaminopimelic acid (SDAP), forming succinate and LL-2,6-diaminopimelate (DAP), an intermediate involved in the bacterial biosynthesis of lysine and meso-diaminopimelic acid, an essential component of bacterial cell walls. The chain is Succinyl-diaminopimelate desuccinylase from Rhizobium rhizogenes (strain K84 / ATCC BAA-868) (Agrobacterium radiobacter).